We begin with the raw amino-acid sequence, 150 residues long: Histone H3-like centromeric protein A (150 aa).

Residues 1-56 (MRPGSTPASRRKSRPPRRVSPPLPTTSTRSPGRPSAPEQRKAPRATPKKRFRPGTR) form a disordered region. A compositionally biased stretch (low complexity) spans 25–37 (TTSTRSPGRPSAP). A compositionally biased stretch (basic residues) spans 42–53 (APRATPKKRFRP). An H3-like region spans residues 53 to 150 (PGTRALMEIR…RIRGVTEGLG (98 aa)).

Belongs to the histone H3 family. Component of centromeric nucleosomes, where DNA is wrapped around a histone octamer core. The octamer contains two molecules each of H2A, H2B, CENPA and H4 assembled in one CENPA-H4 heterotetramer and two H2A-H2B heterodimers. CENPA modulates the DNA-binding characteristics of nucleosomes so that protruding DNA ends have higher flexibility than in nucleosomes containing conventional histone H3.

The protein resides in the nucleus. It is found in the chromosome. Its subcellular location is the centromere. In terms of biological role, histone H3-like nucleosomal protein that is specifically found in centromeric nucleosomes. Replaces conventional H3 in the nucleosome core of centromeric chromatin that serves as an assembly site for the inner kinetochore. The presence of CENPA subtly modifies the nucleosome structure and the way DNA is wrapped around the nucleosome and gives rise to protruding DNA ends that are less well-ordered and rigid compared to nucleosomes containing histone H3. May serve as an epigenetic mark that propagates centromere identity through replication and cell division. Required for recruitment and assembly of kinetochore proteins, and as a consequence required for progress through mitosis, chromosome segregation and cytokinesis. The protein is Histone H3-like centromeric protein A (cenpa) of Xenopus tropicalis (Western clawed frog).